Reading from the N-terminus, the 359-residue chain is Probable cinnamyl alcohol dehydrogenase 8A (359 aa).

Position 45 (C45) interacts with Zn(2+). T47 is an NADP(+) binding site. Zn(2+) contacts are provided by H67, E68, C98, C101, C104, C112, and C161. NADP(+)-binding positions include T165, 186–191 (GLGGLG), 209–214 (SSSPAK), T249, G273, and 296–298 (SGG).

The protein belongs to the zinc-containing alcohol dehydrogenase family. In terms of assembly, homodimer. Zn(2+) is required as a cofactor.

It catalyses the reaction (E)-cinnamyl alcohol + NADP(+) = (E)-cinnamaldehyde + NADPH + H(+). The catalysed reaction is (E)-coniferol + NADP(+) = (E)-coniferaldehyde + NADPH + H(+). It carries out the reaction (E)-sinapyl alcohol + NADP(+) = (E)-sinapaldehyde + NADPH + H(+). The enzyme catalyses (E)-4-coumaroyl alcohol + NADP(+) = (E)-4-coumaraldehyde + NADPH + H(+). It catalyses the reaction (E)-caffeyl alcohol + NADP(+) = (E)-caffeyl aldehyde + NADPH + H(+). It functions in the pathway aromatic compound metabolism; phenylpropanoid biosynthesis. Its function is as follows. Involved in lignin biosynthesis. Catalyzes the final step specific for the production of lignin monomers. Catalyzes the NADPH-dependent reduction of coniferaldehyde, 5-hydroxyconiferaldehyde, sinapaldehyde, 4-coumaraldehyde and caffeyl aldehyde to their respective alcohols. This Oryza sativa subsp. japonica (Rice) protein is Probable cinnamyl alcohol dehydrogenase 8A.